The following is a 393-amino-acid chain: Dual specificity mitogen-activated protein kinase kinase 1 (393 aa).

Residues 1–27 (MPKKKPTPIQLNPAPDGSAVNGTSSAE) are disordered. Residues 68–361 (FEKISELGAG…LKQLMVHAFI (294 aa)) form the Protein kinase domain. Residues 74–82 (LGAGNGGVV), Lys-97, 143–146 (MEHM), and 150–153 (SLDQ) each bind ATP. Lys-97 serves as a coordination point for U0126. 144–146 (EHM) is a K-252a binding site. Asp-190 (proton acceptor) is an active-site residue. ATP-binding positions include 192–195 (KPSN) and Asp-208. Ser-194 provides a ligand contact to K-252a. Residue 208-211 (DFGV) coordinates U0126. A phosphoserine; by BRAF and RAF1 mark is found at Ser-218 and Ser-222. Positions 270 to 307 (ELELMFGCQVEGDAAETPPRPRTPGRPLSSYGMDSRPP) are RAF1-binding. Thr-286 is subject to Phosphothreonine. A Phosphothreonine; by MAPK1 modification is found at Thr-292. Ser-298 is modified (phosphoserine; by PAK).

The protein belongs to the protein kinase superfamily. STE Ser/Thr protein kinase family. MAP kinase kinase subfamily. Found in a complex with at least BRAF, HRAS, MAP2K1, MAPK3/ERK1 and RGS14. Forms a heterodimer with MAP2K2/MEK2. Forms heterodimers with KSR2 which further dimerize to form tetramers. Interacts with KSR1 or KSR2 and BRAF; the interaction with KSR1 or KSR2 mediates KSR1-BRAF or KSR2-BRAF dimerization. Interacts with ARBB2, LAMTOR3 and RAF1. Interacts with MAPK1/ERK2. Interacts with MORG1. Interacts with PPARG. Interacts with isoform 1 of VRK2. Interacts with SGK1. Interacts with BIRC6/bruce. Interacts with KAT7; the interaction promotes KAT7 phosphorylation. Interacts with RAF1 and NEK10; the interaction is required for ERK1/2-signaling pathway activation in response to UV irradiation. Interacts with TRAF3IP3. Interacts with MOS. As to quaternary structure, (Microbial infection) Interacts with Yersinia YopJ. In terms of processing, phosphorylation at Ser-218 and Ser-222 by MAP kinase kinase kinases (BRAF or MEKK1) positively regulates kinase activity. Also phosphorylated at Thr-292 by MAPK1/ERK2 and at Ser-298 by PAK. MAPK1/ERK2 phosphorylation of Thr-292 occurs in response to cellular adhesion and leads to inhibition of Ser-298 phosphorylation by PAK. Autophosphorylated at Ser-218 and Ser-222, autophosphosphorylation is promoted by NEK10 following UV irradiation. (Microbial infection) Acetylation by Yersinia YopJ prevents phosphorylation and activation, thus blocking the MAPK signaling pathway. As to expression, widely expressed, with extremely low levels in brain.

Its subcellular location is the cytoplasm. It localises to the cytoskeleton. The protein localises to the microtubule organizing center. It is found in the centrosome. The protein resides in the spindle pole body. Its subcellular location is the nucleus. It localises to the membrane. The catalysed reaction is L-seryl-[protein] + ATP = O-phospho-L-seryl-[protein] + ADP + H(+). It catalyses the reaction L-threonyl-[protein] + ATP = O-phospho-L-threonyl-[protein] + ADP + H(+). It carries out the reaction L-tyrosyl-[protein] + ATP = O-phospho-L-tyrosyl-[protein] + ADP + H(+). With respect to regulation, ras proteins such as HRAS mediate the activation of RAF proteins such as RAF1 or BRAF which in turn activate extracellular signal-regulated kinases (ERK) through MAPK (mitogen-activated protein kinases) and ERK kinases MAP2K1/MEK1 and MAP2K2/MEK2. Activation occurs through phosphorylation of Ser-218 and Ser-222. MAP2K1/MEK1 binds KSR1 or KSR2 releasing the inhibitory intramolecular interaction between KSR1 or KSR2 protein kinase and N-terminal domains. This allows KSR1 or KSR2 dimerization with BRAF leading to BRAF activation and phosphorylation of MAP2K1. MAP2K1/MEK1 is also the target of negative feed-back regulation by its substrate kinases, such as MAPK1/ERK2. These phosphorylate MAP2K1/MEK1 on Thr-292, thereby facilitating dephosphorylation of the activating residues Ser-218 and Ser-222. Inhibited by serine/threonine phosphatase 2A. Many inhibitors have been identified including pyrrole derivatives, TAK-733 (one of a series of 8-methylpyrido[2,3-d]pyrimidine-4,7(3H,8H)-dione derivatives), CH4987655 and RDEA119/BAY 869766. In terms of biological role, dual specificity protein kinase which acts as an essential component of the MAP kinase signal transduction pathway. Binding of extracellular ligands such as growth factors, cytokines and hormones to their cell-surface receptors activates RAS and this initiates RAF1 activation. RAF1 then further activates the dual-specificity protein kinases MAP2K1/MEK1 and MAP2K2/MEK2. Both MAP2K1/MEK1 and MAP2K2/MEK2 function specifically in the MAPK/ERK cascade, and catalyze the concomitant phosphorylation of a threonine and a tyrosine residue in a Thr-Glu-Tyr sequence located in the extracellular signal-regulated kinases MAPK3/ERK1 and MAPK1/ERK2, leading to their activation and further transduction of the signal within the MAPK/ERK cascade. Activates BRAF in a KSR1 or KSR2-dependent manner; by binding to KSR1 or KSR2 releases the inhibitory intramolecular interaction between KSR1 or KSR2 protein kinase and N-terminal domains which promotes KSR1 or KSR2-BRAF dimerization and BRAF activation. Depending on the cellular context, this pathway mediates diverse biological functions such as cell growth, adhesion, survival and differentiation, predominantly through the regulation of transcription, metabolism and cytoskeletal rearrangements. One target of the MAPK/ERK cascade is peroxisome proliferator-activated receptor gamma (PPARG), a nuclear receptor that promotes differentiation and apoptosis. MAP2K1/MEK1 has been shown to export PPARG from the nucleus. The MAPK/ERK cascade is also involved in the regulation of endosomal dynamics, including lysosome processing and endosome cycling through the perinuclear recycling compartment (PNRC), as well as in the fragmentation of the Golgi apparatus during mitosis. This is Dual specificity mitogen-activated protein kinase kinase 1 from Homo sapiens (Human).